The sequence spans 619 residues: DNA mismatch repair protein MutL (619 aa).

It belongs to the DNA mismatch repair MutL/HexB family.

Its function is as follows. This protein is involved in the repair of mismatches in DNA. It is required for dam-dependent methyl-directed DNA mismatch repair. May act as a 'molecular matchmaker', a protein that promotes the formation of a stable complex between two or more DNA-binding proteins in an ATP-dependent manner without itself being part of a final effector complex. The protein is DNA mismatch repair protein MutL of Xylella fastidiosa (strain 9a5c).